A 199-amino-acid polypeptide reads, in one-letter code: CASP-like protein 4B1 (199 aa).

The tract at residues 1–32 is disordered; the sequence is MAMVASPDDIVKSPLPPPPPPPPPPLPPAHKD. Over 1–53 the chain is Cytoplasmic; the sequence is MAMVASPDDIVKSPLPPPPPPPPPPLPPAHKDKAAYNPYSGCPAHGGDDGLDG. Positions 14-28 are enriched in pro residues; it reads PLPPPPPPPPPPLPP. The chain crosses the membrane as a helical span at residues 54-74; it reads IVLVLRAAAALLALVAMALVA. Residues 75–91 are Extracellular-facing; that stretch reads SCRHGDWMEFTRYQEYR. A helical transmembrane segment spans residues 92–112; the sequence is YLLGVAVVASLYSALQAARTF. Residues 113-127 are Cytoplasmic-facing; it reads RRMRAGTAYAATFLD. A helical membrane pass occupies residues 128 to 148; it reads FAGDQAVGYLLITASSAALPI. The Extracellular portion of the chain corresponds to 149–163; the sequence is TIRMRSAVVNTFTDV. The chain crosses the membrane as a helical span at residues 164-184; that stretch reads VAASISFAFLAFAALAFSALI. The Cytoplasmic segment spans residues 185–199; that stretch reads AGFRLSSSSSSAYNY.

Belongs to the Casparian strip membrane proteins (CASP) family. In terms of assembly, homodimer and heterodimers.

Its subcellular location is the cell membrane. This is CASP-like protein 4B1 from Oryza sativa subsp. japonica (Rice).